The following is a 60-amino-acid chain: Large ribosomal subunit protein uL30 (60 aa).

It belongs to the universal ribosomal protein uL30 family. Part of the 50S ribosomal subunit.

The chain is Large ribosomal subunit protein uL30 from Idiomarina loihiensis (strain ATCC BAA-735 / DSM 15497 / L2-TR).